The sequence spans 312 residues: 4-diphosphocytidyl-2-C-methyl-D-erythritol kinase (312 aa).

K10 is a catalytic residue. 105 to 115 (PVAGGMAGGSA) serves as a coordination point for ATP. D146 is an active-site residue.

It belongs to the GHMP kinase family. IspE subfamily.

The catalysed reaction is 4-CDP-2-C-methyl-D-erythritol + ATP = 4-CDP-2-C-methyl-D-erythritol 2-phosphate + ADP + H(+). It functions in the pathway isoprenoid biosynthesis; isopentenyl diphosphate biosynthesis via DXP pathway; isopentenyl diphosphate from 1-deoxy-D-xylulose 5-phosphate: step 3/6. Its function is as follows. Catalyzes the phosphorylation of the position 2 hydroxy group of 4-diphosphocytidyl-2C-methyl-D-erythritol. The sequence is that of 4-diphosphocytidyl-2-C-methyl-D-erythritol kinase from Corynebacterium glutamicum (strain R).